We begin with the raw amino-acid sequence, 436 residues long: Enolase (436 aa).

Residue Gln-167 coordinates (2R)-2-phosphoglycerate. The Proton donor role is filled by Glu-209. Residues Asp-246, Glu-291, and Asp-318 each coordinate Mg(2+). Positions 343, 372, 373, and 394 each coordinate (2R)-2-phosphoglycerate. The active-site Proton acceptor is the Lys-343.

The protein belongs to the enolase family. In terms of assembly, component of the RNA degradosome, a multiprotein complex involved in RNA processing and mRNA degradation. Mg(2+) is required as a cofactor.

The protein resides in the cytoplasm. The protein localises to the secreted. Its subcellular location is the cell surface. The enzyme catalyses (2R)-2-phosphoglycerate = phosphoenolpyruvate + H2O. It functions in the pathway carbohydrate degradation; glycolysis; pyruvate from D-glyceraldehyde 3-phosphate: step 4/5. Functionally, catalyzes the reversible conversion of 2-phosphoglycerate (2-PG) into phosphoenolpyruvate (PEP). It is essential for the degradation of carbohydrates via glycolysis. In Haemophilus influenzae (strain ATCC 51907 / DSM 11121 / KW20 / Rd), this protein is Enolase.